The chain runs to 384 residues: GTPase Obg (384 aa).

In terms of domain architecture, Obg spans M1–L159. Disordered stretches follow at residues A20–W46 and H129–T149. Positions G33 to G43 are enriched in gly residues. Positions F130–P143 are enriched in polar residues. Residues A160–A348 form the OBG-type G domain. GTP is bound by residues G166–S173, F191–H195, D213–G216, N284–D287, and S329–L331. Residues S173 and T193 each contribute to the Mg(2+) site.

The protein belongs to the TRAFAC class OBG-HflX-like GTPase superfamily. OBG GTPase family. As to quaternary structure, monomer. The cofactor is Mg(2+).

It is found in the cytoplasm. Functionally, an essential GTPase which binds GTP, GDP and possibly (p)ppGpp with moderate affinity, with high nucleotide exchange rates and a fairly low GTP hydrolysis rate; the half-life of the GTP-bound state is about 50 minutes. Plays a role in control of the cell cycle, stress response, ribosome biogenesis and in those bacteria that undergo differentiation, in morphogenesis control. In Neisseria gonorrhoeae (strain ATCC 700825 / FA 1090), this protein is GTPase Obg.